The primary structure comprises 188 residues: Peptidyl-tRNA hydrolase (188 aa).

Residue tyrosine 15 coordinates tRNA. Histidine 20 functions as the Proton acceptor in the catalytic mechanism. Residues phenylalanine 66, asparagine 68, and asparagine 114 each coordinate tRNA.

It belongs to the PTH family. In terms of assembly, monomer.

Its subcellular location is the cytoplasm. The catalysed reaction is an N-acyl-L-alpha-aminoacyl-tRNA + H2O = an N-acyl-L-amino acid + a tRNA + H(+). Functionally, hydrolyzes ribosome-free peptidyl-tRNAs (with 1 or more amino acids incorporated), which drop off the ribosome during protein synthesis, or as a result of ribosome stalling. In terms of biological role, catalyzes the release of premature peptidyl moieties from peptidyl-tRNA molecules trapped in stalled 50S ribosomal subunits, and thus maintains levels of free tRNAs and 50S ribosomes. This chain is Peptidyl-tRNA hydrolase, found in Lactococcus lactis subsp. lactis (strain IL1403) (Streptococcus lactis).